Here is a 61-residue protein sequence, read N- to C-terminus: Photosystem II reaction center protein K (61 aa).

Residues 1 to 24 (MLNIFSLISICLNSALYSSSFFFG) constitute a propeptide that is removed on maturation. Residues 40–60 (MPVIPVFFFLLAFVWQAAVSF) traverse the membrane as a helical segment.

Belongs to the PsbK family. In terms of assembly, PSII is composed of 1 copy each of membrane proteins PsbA, PsbB, PsbC, PsbD, PsbE, PsbF, PsbH, PsbI, PsbJ, PsbK, PsbL, PsbM, PsbT, PsbX, PsbY, PsbZ, Psb30/Ycf12, at least 3 peripheral proteins of the oxygen-evolving complex and a large number of cofactors. It forms dimeric complexes.

The protein localises to the plastid. The protein resides in the chloroplast thylakoid membrane. In terms of biological role, one of the components of the core complex of photosystem II (PSII). PSII is a light-driven water:plastoquinone oxidoreductase that uses light energy to abstract electrons from H(2)O, generating O(2) and a proton gradient subsequently used for ATP formation. It consists of a core antenna complex that captures photons, and an electron transfer chain that converts photonic excitation into a charge separation. The polypeptide is Photosystem II reaction center protein K (Jasminum nudiflorum (Winter jasmine)).